A 358-amino-acid chain; its full sequence is Serine/threonine-protein phosphatase 2A activator (358 aa).

Positions 1 to 20 are disordered; it reads MAEGERQPPPDSSEEAPPAT. Position 2 is an N-acetylalanine (A2). Residues R183, T188, and G189 each contribute to the ATP site. Mg(2+) contacts are provided by G243 and D249. Residues P339, Q342, and H343 each coordinate ATP.

It belongs to the PTPA-type PPIase family. Associates with PP2A heterodimeric core enzyme PP2A(D), composed of a 36 kDa catalytic subunit (subunit C) and a 65 kDa constant regulatory subunit (PR65 or subunit A). Interacts with the catalytic subunit PPP2CA (via C-terminus). Interacts with PPP2CB. Widely expressed.

It is found in the cytoplasm. The protein localises to the nucleus. It catalyses the reaction [protein]-peptidylproline (omega=180) = [protein]-peptidylproline (omega=0). Its function is as follows. PPIases accelerate the folding of proteins. It catalyzes the cis-trans isomerization of proline imidic peptide bonds in oligopeptides. Acts as a regulatory subunit for serine/threonine-protein phosphatase 2A (PP2A). Modulates PP2A activity or substrate specificity, probably by inducing a conformational change in the catalytic subunit, a proposed direct target of the PPIase. Can reactivate inactive phosphatase PP2A-phosphatase methylesterase complexes (PP2A(i)) in presence of ATP and Mg(2+). Reversibly stimulates the variable phosphotyrosyl phosphatase activity of PP2A core heterodimer PP2A(D) in presence of ATP and Mg(2+) (in vitro). The phosphotyrosyl phosphatase activity is dependent of an ATPase activity of the PP2A(D):PPP2R4 complex. Is involved in apoptosis; the function appears to be independent from PP2A. The protein is Serine/threonine-protein phosphatase 2A activator of Homo sapiens (Human).